The following is a 218-amino-acid chain: Eukaryotic translation initiation factor 3 subunit K (218 aa).

The PCI domain occupies 44 to 205 (YDWGANLAVL…NIKTKNITEK (162 aa)).

This sequence belongs to the eIF-3 subunit K family. In terms of assembly, component of the eukaryotic translation initiation factor 3 (eIF-3) complex.

It is found in the cytoplasm. Component of the eukaryotic translation initiation factor 3 (eIF-3) complex, which is involved in protein synthesis of a specialized repertoire of mRNAs and, together with other initiation factors, stimulates binding of mRNA and methionyl-tRNAi to the 40S ribosome. The eIF-3 complex specifically targets and initiates translation of a subset of mRNAs involved in cell proliferation. The sequence is that of Eukaryotic translation initiation factor 3 subunit K from Bombyx mori (Silk moth).